A 198-amino-acid chain; its full sequence is Recombination protein RecR (198 aa).

The segment at 56 to 71 (CDICGNVSEEPTCRIC) adopts a C4-type zinc-finger fold. A Toprim domain is found at 79–175 (AVVCVVEEPK…NVTRLASGLP (97 aa)).

The protein belongs to the RecR family.

May play a role in DNA repair. It seems to be involved in an RecBC-independent recombinational process of DNA repair. It may act with RecF and RecO. This chain is Recombination protein RecR, found in Saccharopolyspora erythraea (strain ATCC 11635 / DSM 40517 / JCM 4748 / NBRC 13426 / NCIMB 8594 / NRRL 2338).